The following is a 152-amino-acid chain: Transposase for insertion sequence element IS200 (152 aa).

Mg(2+)-binding residues include His-61 and His-63. Tyr-125 acts as the Nucleophile in catalysis. Gln-129 contributes to the Mg(2+) binding site.

The protein belongs to the transposase 17 family. Homodimer. The cofactor is Mg(2+).

Its function is as follows. Transposase responsible for transposition of the IS200 insertion sequence (IS) element. Transposition occurs in 2 main steps, excision from the donor DNA 'top strand' into a single strand circle and its subsequent reinsertion into the DNA target. This increases the copy number of the IS. In Salmonella typhi, this protein is Transposase for insertion sequence element IS200 (tnpA1).